Consider the following 367-residue polypeptide: Histidinol-phosphate aminotransferase 1 (367 aa).

Lys229 carries the post-translational modification N6-(pyridoxal phosphate)lysine.

Belongs to the class-II pyridoxal-phosphate-dependent aminotransferase family. Histidinol-phosphate aminotransferase subfamily. In terms of assembly, homodimer. The cofactor is pyridoxal 5'-phosphate.

The catalysed reaction is L-histidinol phosphate + 2-oxoglutarate = 3-(imidazol-4-yl)-2-oxopropyl phosphate + L-glutamate. Its pathway is amino-acid biosynthesis; L-histidine biosynthesis; L-histidine from 5-phospho-alpha-D-ribose 1-diphosphate: step 7/9. In Mesorhizobium japonicum (strain LMG 29417 / CECT 9101 / MAFF 303099) (Mesorhizobium loti (strain MAFF 303099)), this protein is Histidinol-phosphate aminotransferase 1 (hisC1).